Consider the following 207-residue polypeptide: Early nodulin-like protein 11 (207 aa).

A signal peptide spans 1 to 24 (MVSLISIVSVVFLLFTTFYHFGEA). In terms of domain architecture, Phytocyanin spans 25 to 130 (RIINVGGSLD…GEKVTVVVQS (106 aa)). N-linked (GlcNAc...) asparagine glycosylation is present at Asn43. Cys83 and Cys118 are disulfide-bonded. Residues 129 to 179 (QSPNHPKPGPAAVTPTLPPKPSTTPAAPAPAPPTPSPKSSTSTMAPAPAPA) are disordered. A compositionally biased stretch (pro residues) spans 144–164 (TLPPKPSTTPAAPAPAPPTPS). Positions 165-179 (PKSSTSTMAPAPAPA) are enriched in low complexity. Residue Ser181 is the site of GPI-anchor amidated serine attachment. The propeptide at 182 to 207 (SAVGLVAGNGIFWASTLVAVIGLAFA) is removed in mature form.

The protein belongs to the early nodulin-like (ENODL) family. Confined to flowers and siliques.

The protein localises to the cell membrane. Functionally, may act as a carbohydrate transporter. Required, together with ENODL11, ENODL12, ENODL13, ENODL14 and ENODL15, for male-female communication and pollen tube reception and burst at the synergid cell surface of the female gametophyte. The chain is Early nodulin-like protein 11 from Arabidopsis thaliana (Mouse-ear cress).